The chain runs to 229 residues: Enolase-phosphatase E1 (229 aa).

Residues 206-229 are disordered; it reads DRDPASHHPQVQRFDDIHPEQIPA. A compositionally biased stretch (basic and acidic residues) spans 218–229; sequence RFDDIHPEQIPA.

Belongs to the HAD-like hydrolase superfamily. MasA/MtnC family. In terms of assembly, monomer. Requires Mg(2+) as cofactor.

The catalysed reaction is 5-methylsulfanyl-2,3-dioxopentyl phosphate + H2O = 1,2-dihydroxy-5-(methylsulfanyl)pent-1-en-3-one + phosphate. Its pathway is amino-acid biosynthesis; L-methionine biosynthesis via salvage pathway; L-methionine from S-methyl-5-thio-alpha-D-ribose 1-phosphate: step 3/6. It participates in amino-acid biosynthesis; L-methionine biosynthesis via salvage pathway; L-methionine from S-methyl-5-thio-alpha-D-ribose 1-phosphate: step 4/6. Its function is as follows. Bifunctional enzyme that catalyzes the enolization of 2,3-diketo-5-methylthiopentyl-1-phosphate (DK-MTP-1-P) into the intermediate 2-hydroxy-3-keto-5-methylthiopentenyl-1-phosphate (HK-MTPenyl-1-P), which is then dephosphorylated to form the acireductone 1,2-dihydroxy-3-keto-5-methylthiopentene (DHK-MTPene). This Klebsiella oxytoca protein is Enolase-phosphatase E1.